Here is a 549-residue protein sequence, read N- to C-terminus: Sphingosine-1-phosphate transporter SPNS2 (549 aa).

Disordered stretches follow at residues 14-36 (AEEEEADAERRRRRRGAQPGAGG) and 78-97 (PGCAAAAKGPSAPQPKPASL). 11 helical membrane-spanning segments follow: residues 141–161 (GLLQSVFICSFMVAAPIFGYL), 169–189 (VILSCGIFFWSAVTFSSSFIP), 202–222 (LVGIGEASYSTIAPTIIGDLF), 229–249 (LMLSVFYFAIPLGSGLGYITG), 261–281 (WALRVSPVLGMITGTLILILV), 320–340 (LATSAVSFATGALGMWIPLYL), 364–384 (LIFGAITCFTGFLGVVTGAGA), 398–418 (LVCAVGMLGSAIFICLIFVAA), 422–442 (IVGAYICIFVGETLLFSNWAI), 466–486 (TSHLLGDAGSPYLIGFISDLI), and 507–527 (LCPFVVVLGGMFFLATALFFL).

The protein belongs to the major facilitator superfamily. Spinster (TC 2.A.1.49) family. Expression is high in the lungs and liver, low in the lymph nodes, spleen and bone marrow, and very low but detectable in the thymus. Not expressed in red blood cells. Also expressed in the inner ear: expressed in the cochlea, both in the lateral wall and organ of Corti.

The protein resides in the cell membrane. The protein localises to the endosome membrane. The catalysed reaction is sphing-4-enine 1-phosphate(in) = sphing-4-enine 1-phosphate(out). It carries out the reaction sphinganine 1-phosphate(in) = sphinganine 1-phosphate(out). Functionally, lipid transporter that specifically mediates export of sphingosine-1-phosphate (sphing-4-enine 1-phosphate, S1P) and sphinganine-1-phosphate in the lymph, thereby playing a role in lymphocyte trafficking. S1P is a bioactive signaling molecule that regulates many physiological processes important for the development and for the immune system. Regulates levels of S1P and the S1P gradient that exists between the high circulating concentrations of S1P and low tissue levels that control lymphocyte trafficking. Required for the egress of T-cells from lymph nodes during an immune response by mediating S1P secretion, which generates a gradient that enables activated T-cells to access lymph. Also required for the egress of immature B-cells from the bone marrow. In contrast, it does not mediate S1P release from red blood cells. Involved in auditory function: S1P release in the inner ear is required for maintenance of the endocochlear potential in the cochlea. In addition to export, also able to mediate S1P import. This is Sphingosine-1-phosphate transporter SPNS2 from Mus musculus (Mouse).